The sequence spans 60 residues: uncharacterized protein (60 aa).

Residues Y27–G49 traverse the membrane as a helical segment.

Its subcellular location is the membrane. This is an uncharacterized protein from Archaeoglobus fulgidus (strain ATCC 49558 / DSM 4304 / JCM 9628 / NBRC 100126 / VC-16).